Here is a 259-residue protein sequence, read N- to C-terminus: 5'-nucleotidase SurE (259 aa).

Residues D8, D9, S39, and N93 each contribute to the a divalent metal cation site.

Belongs to the SurE nucleotidase family. It depends on a divalent metal cation as a cofactor.

It is found in the cytoplasm. The catalysed reaction is a ribonucleoside 5'-phosphate + H2O = a ribonucleoside + phosphate. Functionally, nucleotidase that shows phosphatase activity on nucleoside 5'-monophosphates. The polypeptide is 5'-nucleotidase SurE (Thermococcus kodakarensis (strain ATCC BAA-918 / JCM 12380 / KOD1) (Pyrococcus kodakaraensis (strain KOD1))).